A 332-amino-acid chain; its full sequence is Arabinogalactan endo-beta-1,4-galactanase (332 aa).

Asparagine 111 carries an N-linked (GlcNAc...) asparagine glycan. Glutamate 135 acts as the Proton donor in catalysis. Glutamate 245 functions as the Nucleophile in the catalytic mechanism.

Belongs to the glycosyl hydrolase 53 family.

The catalysed reaction is The enzyme specifically hydrolyzes (1-&gt;4)-beta-D-galactosidic linkages in type I arabinogalactans.. The polypeptide is Arabinogalactan endo-beta-1,4-galactanase (Humicola insolens (Soft-rot fungus)).